Here is a 405-residue protein sequence, read N- to C-terminus: Protein PAG1 (405 aa).

The signal sequence occupies residues 1 to 50 (MVSLIILFRLTFAIANRVRTLMKVLVIVSFFVLTGSASADSGALSLSGAA). N-linked (GlcNAc...) asparagine glycosylation is found at N55, N104, N256, and N351. The GPI-anchor amidated alanine moiety is linked to residue A391. A propeptide spans 392 to 405 (DSLRRTLALLFLLF) (removed in mature form).

The protein localises to the cell membrane. This Trypanosoma brucei brucei protein is Protein PAG1 (PAG1).